A 493-amino-acid polypeptide reads, in one-letter code: Acetyl-coenzyme A carboxylase carboxyl transferase subunit beta (493 aa).

The CoA carboxyltransferase N-terminal domain maps to 231–493 (LWVQCENCYG…FKLHAFFPLN (263 aa)). Zn(2+) contacts are provided by Cys-235, Cys-238, Cys-254, and Cys-257. A C4-type zinc finger spans residues 235–257 (CENCYGLNYKKFLKSKINLCEQC).

The protein belongs to the AccD/PCCB family. As to quaternary structure, acetyl-CoA carboxylase is a heterohexamer composed of biotin carboxyl carrier protein, biotin carboxylase and 2 subunits each of ACCase subunit alpha and ACCase plastid-coded subunit beta (accD). Zn(2+) serves as cofactor.

It is found in the plastid stroma. It catalyses the reaction N(6)-carboxybiotinyl-L-lysyl-[protein] + acetyl-CoA = N(6)-biotinyl-L-lysyl-[protein] + malonyl-CoA. The protein operates within lipid metabolism; malonyl-CoA biosynthesis; malonyl-CoA from acetyl-CoA: step 1/1. Functionally, component of the acetyl coenzyme A carboxylase (ACC) complex. Biotin carboxylase (BC) catalyzes the carboxylation of biotin on its carrier protein (BCCP) and then the CO(2) group is transferred by the transcarboxylase to acetyl-CoA to form malonyl-CoA. The chain is Acetyl-coenzyme A carboxylase carboxyl transferase subunit beta from Epifagus virginiana (Beechdrops).